An 872-amino-acid polypeptide reads, in one-letter code: MLTAKETRDSFKNFFESKGHQIVPSAPMVIKDDPTLMFTNAGMNQFKDIILGNHPAKYHRVADSQKCLRVSGKHNDLEEVGHDTYHHTMFEMLGNWSFGDYFKKEAISWAWEYLVDVLKLNPEHLYATVFEGSPEEGLERDNEAASYWEQYLPKDHIINGNKHDNFWEMGDTGPCGPCSEIHIDLRPAEERAKISGRDLVNHDHPQVIEIWNLVFMQYNRKADSTLEPLPAKVIDTGMGFERLCMALQGKTSNYDTDVFQPLIKAIAQMAGTEYGKNEQNDIAMRVIADHIRTIAFSITDGQLPSNAKAGYVIRRILRRAVRYGYTFLGQKQAFMYKLLPVLIDSMGDAYPELIAQKELIEKVIKEEEESFLRTLETGIRLLDKTMADTKANGKTEISGKDAFTLYDTFGFPLDLTELILRENGMTVNVEEFDAEMQQQKQRARNAAAIETGDWIILKEGTTEFVGYDYTEYETSILRYRQVKQKNQTLYQIVLDYTPFYAESGGQVGDTGVLVNEFETIEVIDTKKENNLPIHITKKLPEHPEAPMMACVDTDKRAACAANHSATHLLDEALREVLGEHVEQKGSLVTPDSLRFDFSHFQKVTDEELRKVEHLVNAKIRANVPLQEHRNIPIEEAKELGAIALFGEKYGDHVRVIQFGSSIEFCGGTHVAATGNIGMVKIISESSVAAGVRRIEAYTGARVEEMLDTIQDTLSDLKALFNNTPDLGVAIRKYIDENAGLKKQVEDFMKEKEAAVKERLLKNVQEINGIKVIKFCLPMPAEVVKNIAFQLRGEITENLFFVAGTVDANKPMLTVMISDNLVAGGLKAGNLVKEAAKLIQGGGGGQPHFATAGGKNPDGLNAAVEKVLELAGI.

Zn(2+) is bound by residues His-563, His-567, Cys-665, and His-669.

Belongs to the class-II aminoacyl-tRNA synthetase family. The cofactor is Zn(2+).

The protein localises to the cytoplasm. The enzyme catalyses tRNA(Ala) + L-alanine + ATP = L-alanyl-tRNA(Ala) + AMP + diphosphate. Its function is as follows. Catalyzes the attachment of alanine to tRNA(Ala) in a two-step reaction: alanine is first activated by ATP to form Ala-AMP and then transferred to the acceptor end of tRNA(Ala). Also edits incorrectly charged Ser-tRNA(Ala) and Gly-tRNA(Ala) via its editing domain. The chain is Alanine--tRNA ligase from Bacteroides fragilis (strain ATCC 25285 / DSM 2151 / CCUG 4856 / JCM 11019 / LMG 10263 / NCTC 9343 / Onslow / VPI 2553 / EN-2).